Here is a 264-residue protein sequence, read N- to C-terminus: H-2 class II histocompatibility antigen, E-B beta chain (264 aa).

Residues 1 to 26 (MVWLPRVPCVAAVILLLTVLSPPMAL) form the signal peptide. Residues 27–121 (VRDSRPWFLE…ISDKFLVRRR (95 aa)) form a beta-1 region. Residues 27–225 (VRDSRPWFLE…KAQSTSAQNK (199 aa)) are Extracellular-facing. Disulfide bonds link cysteine 38–cysteine 106 and cysteine 144–cysteine 200. Residue asparagine 46 is glycosylated (N-linked (GlcNAc...) asparagine). The interval 122–225 (VEPTVTVYPT…KAQSTSAQNK (104 aa)) is beta-2. The Ig-like C1-type domain occupies 124 to 214 (PTVTVYPTKT…PSLTDPVTVE (91 aa)). The helical transmembrane segment at 226 to 246 (MLSGVGGFVLGLLFLGAGLFI) threads the bilayer. At 247–264 (YFRNQKGQSGLQPTGLLS) the chain is on the cytoplasmic side.

It belongs to the MHC class II family. Ubiquitinated in immature dendritic cells leading to down-regulation of MHC class II.

It is found in the membrane. In Mus musculus (Mouse), this protein is H-2 class II histocompatibility antigen, E-B beta chain (H2-Eb1).